The chain runs to 479 residues: ATP synthase subunit beta (479 aa).

153–160 serves as a coordination point for ATP; it reads GGAGVGKT.

Belongs to the ATPase alpha/beta chains family. In terms of assembly, F-type ATPases have 2 components, CF(1) - the catalytic core - and CF(0) - the membrane proton channel. CF(1) has five subunits: alpha(3), beta(3), gamma(1), delta(1), epsilon(1). CF(0) has three main subunits: a(1), b(2) and c(9-12). The alpha and beta chains form an alternating ring which encloses part of the gamma chain. CF(1) is attached to CF(0) by a central stalk formed by the gamma and epsilon chains, while a peripheral stalk is formed by the delta and b chains.

The protein resides in the cell membrane. It catalyses the reaction ATP + H2O + 4 H(+)(in) = ADP + phosphate + 5 H(+)(out). In terms of biological role, produces ATP from ADP in the presence of a proton gradient across the membrane. The catalytic sites are hosted primarily by the beta subunits. This Lactobacillus helveticus (strain DPC 4571) protein is ATP synthase subunit beta.